We begin with the raw amino-acid sequence, 364 residues long: Ferrochelatase (364 aa).

H210 and E291 together coordinate Fe cation.

The protein belongs to the ferrochelatase family.

It localises to the cytoplasm. It catalyses the reaction heme b + 2 H(+) = protoporphyrin IX + Fe(2+). It functions in the pathway porphyrin-containing compound metabolism; protoheme biosynthesis; protoheme from protoporphyrin-IX: step 1/1. Functionally, catalyzes the ferrous insertion into protoporphyrin IX. The sequence is that of Ferrochelatase from Idiomarina loihiensis (strain ATCC BAA-735 / DSM 15497 / L2-TR).